We begin with the raw amino-acid sequence, 1404 residues long: DNA-directed RNA polymerase subunit beta' (1404 aa).

4 residues coordinate Zn(2+): cysteine 70, cysteine 72, cysteine 85, and cysteine 88. Mg(2+) contacts are provided by aspartate 460, aspartate 462, and aspartate 464. Residues cysteine 825, cysteine 899, cysteine 906, and cysteine 909 each contribute to the Zn(2+) site.

It belongs to the RNA polymerase beta' chain family. In terms of assembly, the RNAP catalytic core consists of 2 alpha, 1 beta, 1 beta' and 1 omega subunit. When a sigma factor is associated with the core the holoenzyme is formed, which can initiate transcription. It depends on Mg(2+) as a cofactor. Zn(2+) is required as a cofactor.

The catalysed reaction is RNA(n) + a ribonucleoside 5'-triphosphate = RNA(n+1) + diphosphate. DNA-dependent RNA polymerase catalyzes the transcription of DNA into RNA using the four ribonucleoside triphosphates as substrates. In Nitrosomonas europaea (strain ATCC 19718 / CIP 103999 / KCTC 2705 / NBRC 14298), this protein is DNA-directed RNA polymerase subunit beta'.